A 446-amino-acid polypeptide reads, in one-letter code: tRNA (guanine-N(7)-)-methyltransferase non-catalytic subunit TRM82 (446 aa).

Residues 67 to 97 form a disordered region; it reads LTQTSEDTEQENTAPYKKQKSSVSKPIKVPK. Over residues 87–97 the composition is skewed to low complexity; that stretch reads SSVSKPIKVPK. WD repeat units follow at residues 107–147, 202–243, and 247–287; these read PIYN…TENC, GHVS…IVKH, and GHRE…LLSK.

The protein belongs to the WD repeat TRM82 family. Forms a heterodimer with the catalytic subunit TRM8.

The protein resides in the nucleus. The protein operates within tRNA modification; N(7)-methylguanine-tRNA biosynthesis. Functionally, required for the formation of N(7)-methylguanine at position 46 (m7G46) in tRNA. In the complex, it is required to stabilize and induce conformational changes of the catalytic subunit. This Debaryomyces hansenii (strain ATCC 36239 / CBS 767 / BCRC 21394 / JCM 1990 / NBRC 0083 / IGC 2968) (Yeast) protein is tRNA (guanine-N(7)-)-methyltransferase non-catalytic subunit TRM82.